The primary structure comprises 76 residues: uncharacterized protein (76 aa).

The helical transmembrane segment at 20–42 (GIVWGPKLAPWGITLGLGAFYFF) threads the bilayer.

The protein localises to the membrane. This is an uncharacterized protein from Dictyostelium discoideum (Social amoeba).